The primary structure comprises 561 residues: Putative transport protein YbjL (561 aa).

5 consecutive transmembrane segments (helical) span residues 8–28, 32–52, 66–86, 94–114, and 158–178; these read LLNG…LCLG, LGSV…LLGQ, FMLF…SIFF, MLAL…GKLF, and NLSL…IVGA. RCK C-terminal domains lie at 200–288 and 292–373; these read RGLD…SFRN and VFDR…RIGF. 5 helical membrane-spanning segments follow: residues 383-403, 406-426, 447-467, 475-495, and 540-560; these read LLAF…TFQF, FSFG…LGFL, FGLM…INNG, MLIA…LFGA, and AIAN…WPGL.

The protein belongs to the AAE transporter (TC 2.A.81) family. YbjL subfamily.

Its subcellular location is the cell membrane. The sequence is that of Putative transport protein YbjL from Salmonella paratyphi C (strain RKS4594).